Consider the following 441-residue polypeptide: 3-oxo-glucose-6-phosphate:glutamate aminotransferase (441 aa).

98–99 (TS) contributes to the substrate binding site. 125–126 (GT) is a pyridoxal 5'-phosphate binding site. Residue phenylalanine 151 coordinates substrate. Residues glutamine 225 and serine 242 each contribute to the pyridoxal 5'-phosphate site. 244-246 (NPY) is a substrate binding site. N6-(pyridoxal phosphate)lysine is present on lysine 247. Tyrosine 274 and lysine 282 together coordinate substrate. Asparagine 292 is a binding site for pyridoxal 5'-phosphate. Tyrosine 379 lines the substrate pocket.

This sequence belongs to the DegT/DnrJ/EryC1 family. As to quaternary structure, homodimer. It depends on pyridoxal 5'-phosphate as a cofactor.

It carries out the reaction 3-dehydro-D-glucose 6-phosphate + L-glutamate = D-kanosamine 6-phosphate + 2-oxoglutarate. It participates in antibiotic biosynthesis; kanosamine biosynthesis. In terms of biological role, involved in the biosynthesis of kanosamine (3-amino-3-deoxy-D-glucose), which is known to have antibiotic and antifungal properties, and to be a precursor of the antibiotic neotrehalosadiamine (3,3'-diamino-3,3'-dideoxy-alpha,beta-trehalose (NTD)). Catalyzes the reversible pyridoxal phosphate-dependent transamination of 3-dehydro-alpha-D-glucose 6-phosphate to form alpha-D-kanosamine-6-phosphate. It can only use alpha-anomer and glutamate is the only amino donor. The polypeptide is 3-oxo-glucose-6-phosphate:glutamate aminotransferase (ntdA) (Bacillus subtilis (strain 168)).